We begin with the raw amino-acid sequence, 254 residues long: Triosephosphate isomerase (254 aa).

Position 10 to 12 (10 to 12 (NWK)) interacts with substrate. H96 acts as the Electrophile in catalysis. The active-site Proton acceptor is the E168. Residues G174, S214, and 235 to 236 (GG) contribute to the substrate site.

This sequence belongs to the triosephosphate isomerase family. As to quaternary structure, homodimer.

It is found in the cytoplasm. The catalysed reaction is D-glyceraldehyde 3-phosphate = dihydroxyacetone phosphate. The protein operates within carbohydrate biosynthesis; gluconeogenesis. Its pathway is carbohydrate degradation; glycolysis; D-glyceraldehyde 3-phosphate from glycerone phosphate: step 1/1. Its function is as follows. Involved in the gluconeogenesis. Catalyzes stereospecifically the conversion of dihydroxyacetone phosphate (DHAP) to D-glyceraldehyde-3-phosphate (G3P). The polypeptide is Triosephosphate isomerase (Rhodopirellula baltica (strain DSM 10527 / NCIMB 13988 / SH1)).